Consider the following 263-residue polypeptide: Small ribosomal subunit protein uS2 (263 aa).

Residues 230-249 (GEALVNEEKEITDEEKKEVL) are compositionally biased toward basic and acidic residues. The disordered stretch occupies residues 230-263 (GEALVNEEKEITDEEKKEVLDEAMSEEDFGEEQE). Acidic residues predominate over residues 250 to 263 (DEAMSEEDFGEEQE).

This sequence belongs to the universal ribosomal protein uS2 family.

The polypeptide is Small ribosomal subunit protein uS2 (Campylobacter jejuni subsp. jejuni serotype O:2 (strain ATCC 700819 / NCTC 11168)).